The primary structure comprises 372 residues: MAFKQLFAAISLALSLSAANAAAVIEKRATCSNGKTVGDASSCAWFDVLDDIQQNLFHGGQCGAEAHESIRLVFHDSIAISPAMEAQGKFGGGGADGSIMIFDDIETAFHPNIGLDEIVKLQKPFVQKHGCTPGDFIAFAGAVALSNCPGAPQMNFFTGRAPATQAAPDGLVPEPFHTVDQIINRVNDAGEFDELELVWMLSAHSVAAVNDVDPTVQGLPFDSTPGIFDSQFFVETQLRGTAFPGSGGNQGEVESPLPGEIRIQSDHTIARDSRTACEWQSFVNNQSKLVDDFQFIFLALTQLGQDPNAMTDCSDVIPQSKPIPGNLPFSFFPAGKTIKDVEQACAETPFPTLTTLPGPETSVQRIPPPPGA.

The first 21 residues, 1-21 (MAFKQLFAAISLALSLSAANA), serve as a signal peptide directing secretion. A propeptide spanning residues 22–28 (AAVIEKR) is cleaved from the precursor. 2 cysteine pairs are disulfide-bonded: C31–C43 and C62–C148. H75 (proton acceptor) is an active-site residue. Ca(2+)-binding residues include D76, G94, D96, and S98. H204 is a heme b binding site. Residues S205, D222, T224, I227, and D229 each coordinate Ca(2+). C277 and C345 are disulfide-bonded. N285 carries an N-linked (GlcNAc...) asparagine glycan. Low complexity predominate over residues 350 to 361 (FPTLTTLPGPET). A disordered region spans residues 350–372 (FPTLTTLPGPETSVQRIPPPPGA).

Belongs to the peroxidase family. Ligninase subfamily. Heme b serves as cofactor. It depends on Ca(2+) as a cofactor.

It catalyses the reaction 1-(3,4-dimethoxyphenyl)-2-(2-methoxyphenoxy)propane-1,3-diol + H2O2 = 3,4-dimethoxybenzaldehyde + guaiacol + glycolaldehyde + H2O. The enzyme catalyses 2 (3,4-dimethoxyphenyl)methanol + H2O2 = 2 (3,4-dimethoxyphenyl)methanol radical + 2 H2O. It participates in secondary metabolite metabolism; lignin degradation. Depolymerization of lignin. Catalyzes the C(alpha)-C(beta) cleavage of the propyl side chains of lignin. The polypeptide is Ligninase LG3 (GLG3) (Phanerodontia chrysosporium (White-rot fungus)).